A 193-amino-acid chain; its full sequence is Phosphatidylglycerophosphatase and protein-tyrosine phosphatase 1 (193 aa).

Residues 1–31 (MAASAWLEAGLARVLFYPTLLYTVFRGRVGG) constitute a mitochondrion transit peptide. One can recognise a Tyrosine-protein phosphatase domain in the interval 37–188 (WYHRIDHTVL…LKEFHKEIAA (152 aa)). The residue at position 85 (K85) is an N6-succinyllysine. Residue C132 is the Phosphocysteine intermediate of the active site.

It belongs to the protein-tyrosine phosphatase family. Non-receptor class dual specificity subfamily. In terms of assembly, interacts with STYXL1; the interaction inhibits PTPMT1 catalytic activity. As to expression, expressed in liver and in pancreatic beta cells.

It localises to the mitochondrion inner membrane. It catalyses the reaction O-phospho-L-tyrosyl-[protein] + H2O = L-tyrosyl-[protein] + phosphate. The enzyme catalyses O-phospho-L-seryl-[protein] + H2O = L-seryl-[protein] + phosphate. It carries out the reaction O-phospho-L-threonyl-[protein] + H2O = L-threonyl-[protein] + phosphate. The catalysed reaction is a 1,2-diacyl-sn-glycero-3-phospho-(1'-sn-glycero-3'-phosphate) + H2O = a 1,2-diacyl-sn-glycero-3-phospho-(1'-sn-glycerol) + phosphate. It catalyses the reaction 1,2-di-(9Z-octadecenoyl)-sn-glycero-3-phospho-(1'-sn-glycerol-3'-phosphate) + H2O = 1,2-di-(9Z-octadecenoyl)-sn-glycero-3-phospho-(1'-sn-glycerol) + phosphate. The enzyme catalyses 1,2-dioctanoyl-sn-glycero-3-phospho-(1D-myo-inositol-5-phosphate) + H2O = 1,2-dioctanoyl-sn-glycero-3-phospho-(1D-myo-inositol) + phosphate. It carries out the reaction a 1-acyl-2-hexanoyl-sn-glycero-3-phospho-(1D-myo-inositol-5-phosphate) + H2O = a 1-acyl-2-hexanoyl-sn-glycero-3-phospho-(1D-myo-inositol) + phosphate. The catalysed reaction is 1,2-dibutyryl-sn-glycero-3-phospho-(1D-myo-inositol-5-phosphate) + H2O = 1,2-dibutyryl-sn-glycero-3-phospho-(1D-myo-inositol) + phosphate. It functions in the pathway phospholipid metabolism; phosphatidylglycerol biosynthesis; phosphatidylglycerol from CDP-diacylglycerol: step 2/2. Lipid phosphatase which dephosphorylates phosphatidylglycerophosphate (PGP) to phosphatidylglycerol (PG). PGP is an essential intermediate in the biosynthetic pathway of cardiolipin, a mitochondrial-specific phospholipid regulating the membrane integrity and activities of the organelle. Has also been shown to display phosphatase activity toward phosphoprotein substrates, specifically mediates dephosphorylation of mitochondrial proteins, thereby playing an essential role in ATP production. Has probably a preference for proteins phosphorylated on Ser and/or Thr residues compared to proteins phosphorylated on Tyr residues. Probably involved in regulation of insulin secretion in pancreatic beta cells. May prevent intrinsic apoptosis, probably by regulating mitochondrial membrane integrity. In Rattus norvegicus (Rat), this protein is Phosphatidylglycerophosphatase and protein-tyrosine phosphatase 1.